Here is a 1072-residue protein sequence, read N- to C-terminus: Integrator complex subunit 3 homolog (1072 aa).

Disordered regions lie at residues 920–943 and 1002–1072; these read YPSS…STPS and DTTV…NDSD. Phosphoserine is present on residues S1042, S1043, S1047, and S1048.

Belongs to the Integrator subunit 3 family. Belongs to the multiprotein complex Integrator, at least composed of IntS1, IntS2, IntS3, IntS4, omd/IntS5, IntS6, defl/IntS7, IntS8, IntS9, IntS10, IntS11, IntS12, asun/IntS13, IntS14 and IntS15. The core complex associates with protein phosphatase 2A subunits mts/PP2A and Pp2A-29B, to form the Integrator-PP2A (INTAC) complex.

The protein localises to the nucleus. The protein resides in the cytoplasm. Functionally, component of the integrator complex, a multiprotein complex that terminates RNA polymerase II (Pol II) transcription in the promoter-proximal region of genes. The integrator complex provides a quality checkpoint during transcription elongation by driving premature transcription termination of transcripts that are unfavorably configured for transcriptional elongation: the complex terminates transcription by (1) catalyzing dephosphorylation of the C-terminal domain (CTD) of Pol II subunit Polr2A/Rbp1 and Spt5, and (2) degrading the exiting nascent RNA transcript via endonuclease activity. The integrator complex is also involved in the 3'-end processing of the U7 snRNA, and also the spliceosomal snRNAs U1, U2, U4 and U5. The polypeptide is Integrator complex subunit 3 homolog (IntS3) (Drosophila yakuba (Fruit fly)).